A 161-amino-acid polypeptide reads, in one-letter code: DNA-binding protein inhibitor ID-4 (161 aa).

Residues 52–104 (AAEAAADEPALCLQCDMNDCYSRLRRLVPTIPPNKKVSKVEILQHVIDYILDL) form the bHLH domain. Residues 117-126 (QPPPPAPPHH) are compositionally biased toward pro residues. Residues 117–161 (QPPPPAPPHHPAGTCPAAPPRTPLTALNTDPAGAVNKQGDSILCR) are disordered.

As to quaternary structure, heterodimer with other HLH proteins.

Its subcellular location is the nucleus. Functionally, transcriptional regulator (lacking a basic DNA binding domain) which negatively regulates the basic helix-loop-helix (bHLH) transcription factors by forming heterodimers and inhibiting their DNA binding and transcriptional activity. Implicated in regulating a variety of cellular processes, including cellular growth, senescence, differentiation, apoptosis, angiogenesis, and neoplastic transformation. This Homo sapiens (Human) protein is DNA-binding protein inhibitor ID-4 (ID4).